Reading from the N-terminus, the 505-residue chain is Trans-cinnamate 4-monooxygenase C4H2 (505 aa).

2 consecutive short sequence motifs (nuclear localization signal) follow at residues 161–168 (VKKMKESN) and 247–254 (EKRLKLFK). Residue C447 coordinates heme.

It belongs to the cytochrome P450 family. Heme serves as cofactor.

Its subcellular location is the nucleus. The enzyme catalyses (E)-cinnamate + reduced [NADPH--hemoprotein reductase] + O2 = (E)-4-coumarate + oxidized [NADPH--hemoprotein reductase] + H2O + H(+). The protein operates within phenylpropanoid metabolism; trans-4-coumarate biosynthesis; trans-4-coumarate from trans-cinnamate: step 1/1. Functionally, component of the floral volatile benzenoid/phenylpropanoid (FVBP) biosynthetic pathway that controls carbon flux to pigments essential for pollination or UV protection, to numerous pytoalexins synthesized by plants when challenged by pathogens, and to lignins. The chain is Trans-cinnamate 4-monooxygenase C4H2 from Petunia hybrida (Petunia).